The sequence spans 621 residues: 1-deoxy-D-xylulose-5-phosphate synthase (621 aa).

Residues histidine 80 and 121-123 (GHS) contribute to the thiamine diphosphate site. Residue aspartate 152 participates in Mg(2+) binding. Thiamine diphosphate is bound by residues 153–154 (GA), asparagine 181, tyrosine 288, and glutamate 370. Residue asparagine 181 coordinates Mg(2+).

Belongs to the transketolase family. DXPS subfamily. As to quaternary structure, homodimer. Requires Mg(2+) as cofactor. Thiamine diphosphate serves as cofactor.

It carries out the reaction D-glyceraldehyde 3-phosphate + pyruvate + H(+) = 1-deoxy-D-xylulose 5-phosphate + CO2. The protein operates within metabolic intermediate biosynthesis; 1-deoxy-D-xylulose 5-phosphate biosynthesis; 1-deoxy-D-xylulose 5-phosphate from D-glyceraldehyde 3-phosphate and pyruvate: step 1/1. Catalyzes the acyloin condensation reaction between C atoms 2 and 3 of pyruvate and glyceraldehyde 3-phosphate to yield 1-deoxy-D-xylulose-5-phosphate (DXP). The polypeptide is 1-deoxy-D-xylulose-5-phosphate synthase (Erwinia tasmaniensis (strain DSM 17950 / CFBP 7177 / CIP 109463 / NCPPB 4357 / Et1/99)).